We begin with the raw amino-acid sequence, 135 residues long: Large-conductance mechanosensitive channel (135 aa).

The next 2 membrane-spanning stretches (helical) occupy residues 10-30 (FAMR…GAFG) and 76-96 (GSFI…FCVI).

Belongs to the MscL family. In terms of assembly, homopentamer.

It localises to the cell inner membrane. Channel that opens in response to stretch forces in the membrane lipid bilayer. May participate in the regulation of osmotic pressure changes within the cell. This chain is Large-conductance mechanosensitive channel, found in Campylobacter concisus (strain 13826).